The primary structure comprises 1191 residues: Major DNA-binding protein (1191 aa).

Residues 288 to 307 (ETTKGQSKMGKREGSDVSGG) form a disordered region. Residues 498–511 (CELCDKTSRIYCAH) fold into a zinc finger. Positions 841-842 (FW) match the Required for filament formation motif. Positions 1166-1191 (KRPNMNVFDLEPIPEKRVPVLSVDML) are required for nuclear localization.

The protein belongs to the herpesviridae major DNA-binding protein family. Homooligomers. Forms double-helical filaments necessary for the formation of replication compartments within the host nucleus. Interacts with the origin-binding protein. Interacts with the helicase primase complex; this interaction stimulates primer synthesis activity of the helicase-primase complex. Interacts with the DNA polymerase. Interacts with the alkaline exonuclease; this interaction increases its nuclease processivity.

It is found in the host nucleus. Plays several crucial roles in viral infection. Participates in the opening of the viral DNA origin to initiate replication by interacting with the origin-binding protein. May disrupt loops, hairpins and other secondary structures present on ssDNA to reduce and eliminate pausing of viral DNA polymerase at specific sites during elongation. Promotes viral DNA recombination by performing strand-transfer, characterized by the ability to transfer a DNA strand from a linear duplex to a complementary single-stranded DNA circle. Can also catalyze the renaturation of complementary single strands. Additionally, reorganizes the host cell nucleus, leading to the formation of prereplicative sites and replication compartments. This process is driven by the protein which can form double-helical filaments in the absence of DNA. This is Major DNA-binding protein from Gallid herpesvirus 2 (strain Chicken/Md5/ATCC VR-987) (GaHV-2).